The sequence spans 408 residues: LL-diaminopimelate aminotransferase (408 aa).

Substrate-binding residues include Tyr-15 and Gly-42. Pyridoxal 5'-phosphate contacts are provided by residues Tyr-72, 108 to 109, Tyr-132, Asn-187, Tyr-218, and 246 to 248; these read SK and SFS. 3 residues coordinate substrate: Lys-109, Tyr-132, and Asn-187. Lys-249 carries the N6-(pyridoxal phosphate)lysine modification. Pyridoxal 5'-phosphate contacts are provided by Arg-257 and Asn-292. Residues Asn-292 and Arg-388 each contribute to the substrate site.

The protein belongs to the class-I pyridoxal-phosphate-dependent aminotransferase family. LL-diaminopimelate aminotransferase subfamily. As to quaternary structure, homodimer. Pyridoxal 5'-phosphate serves as cofactor.

It catalyses the reaction (2S,6S)-2,6-diaminopimelate + 2-oxoglutarate = (S)-2,3,4,5-tetrahydrodipicolinate + L-glutamate + H2O + H(+). The protein operates within amino-acid biosynthesis; L-lysine biosynthesis via DAP pathway; LL-2,6-diaminopimelate from (S)-tetrahydrodipicolinate (aminotransferase route): step 1/1. Its function is as follows. Involved in the synthesis of meso-diaminopimelate (m-DAP or DL-DAP), required for both lysine and peptidoglycan biosynthesis. Catalyzes the direct conversion of tetrahydrodipicolinate to LL-diaminopimelate. The chain is LL-diaminopimelate aminotransferase from Leptospira borgpetersenii serovar Hardjo-bovis (strain L550).